The primary structure comprises 521 residues: Pentatricopeptide repeat-containing protein At4g26680, mitochondrial (521 aa).

Residues 1 to 38 (MIRISIGVNRRLRYQFSSFAGYSGSENPRLFKTLGAAN) constitute a mitochondrion transit peptide. PPR repeat units lie at residues 167–201 (TPRV…GFLP), 202–236 (TVES…KISP), 237–271 (NPYT…GFRA), 272–306 (TDVS…GLQP), 307–341 (NVVT…NVAP), 342–376 (NTVT…GIQR), 377–411 (DILT…NLVP), 412–446 (NSST…GCHP), 447–481 (NEQT…SIPL), and 482–516 (DSRT…KFLQ).

The protein belongs to the PPR family. P subfamily.

Its subcellular location is the mitochondrion. The sequence is that of Pentatricopeptide repeat-containing protein At4g26680, mitochondrial from Arabidopsis thaliana (Mouse-ear cress).